A 347-amino-acid polypeptide reads, in one-letter code: Glucose 1-dehydrogenase (347 aa).

C39 is a Zn(2+) binding site. A substrate-binding site is contributed by T41. Zn(2+)-binding residues include H64 and E65. E110 and E146 together coordinate substrate. E146 provides a ligand contact to Zn(2+). Residues 178–181 (AGPV), 260–262 (LGV), and 289–291 (SVN) contribute to the NADP(+) site. N291 contributes to the substrate binding site.

This sequence belongs to the zinc-containing alcohol dehydrogenase family. Glucose 1-dehydrogenase subfamily. Homodimer. It depends on Zn(2+) as a cofactor.

It carries out the reaction D-glucose + NAD(+) = D-glucono-1,5-lactone + NADH + H(+). The catalysed reaction is D-glucose + NADP(+) = D-glucono-1,5-lactone + NADPH + H(+). Catalyzes the NAD(P)(+)-dependent oxidation of D-glucose to D-gluconate via gluconolactone. To a lesser extent, is also active with xylose as substrate, but mannose, arabinose, galactose, fructose 6-phosphate, glucose 6-phosphate, glycerinaldehyde 3-phosphate, ribose, sorbitol, ethanol, erythritol, or lactose are not oxidized by the enzyme. Can utilize both NAD(+) and NADP(+) as electron acceptor, with a marked preference for NADP(+). Is involved in the degradation of glucose through a non-phosphorylative variant of the Entner-Doudoroff pathway. This Thermoproteus tenax (strain ATCC 35583 / DSM 2078 / JCM 9277 / NBRC 100435 / Kra 1) protein is Glucose 1-dehydrogenase (gdh).